The sequence spans 254 residues: Small ribosomal subunit protein uS3 (254 aa).

One can recognise a KH type-2 domain in the interval 39 to 109; the sequence is IRNYISARLK…EVKIDVIEVI (71 aa). The interval 220–254 is disordered; sequence EEMKKMQERRNDSRGRGRGDGRGAKRRRRPAAKKA. Residues 221-242 are compositionally biased toward basic and acidic residues; that stretch reads EMKKMQERRNDSRGRGRGDGRG. A compositionally biased stretch (basic residues) spans 243–254; sequence AKRRRRPAAKKA.

The protein belongs to the universal ribosomal protein uS3 family. As to quaternary structure, part of the 30S ribosomal subunit. Forms a tight complex with proteins S10 and S14.

Its function is as follows. Binds the lower part of the 30S subunit head. Binds mRNA in the 70S ribosome, positioning it for translation. The chain is Small ribosomal subunit protein uS3 from Chlorobaculum parvum (strain DSM 263 / NCIMB 8327) (Chlorobium vibrioforme subsp. thiosulfatophilum).